Consider the following 283-residue polypeptide: Pantothenate synthetase (283 aa).

26–33 (MGNLHEGH) contacts ATP. The active-site Proton donor is H33. Q57 contacts (R)-pantoate. Q57 is a binding site for beta-alanine. ATP is bound at residue 144 to 147 (GKKD). Residue Q150 coordinates (R)-pantoate. 181–184 (LSSR) serves as a coordination point for ATP.

It belongs to the pantothenate synthetase family. In terms of assembly, homodimer.

It localises to the cytoplasm. The enzyme catalyses (R)-pantoate + beta-alanine + ATP = (R)-pantothenate + AMP + diphosphate + H(+). Its pathway is cofactor biosynthesis; (R)-pantothenate biosynthesis; (R)-pantothenate from (R)-pantoate and beta-alanine: step 1/1. Its function is as follows. Catalyzes the condensation of pantoate with beta-alanine in an ATP-dependent reaction via a pantoyl-adenylate intermediate. The chain is Pantothenate synthetase from Variovorax paradoxus (strain S110).